The chain runs to 199 residues: Recombination protein RecR (199 aa).

The segment at 57 to 72 adopts a C4-type zinc-finger fold; that stretch reads CSICGNITEDDPCVIC. Residues 80-176 form the Toprim domain; sequence STVLVVEEAK…KVTRLAHGLS (97 aa).

The protein belongs to the RecR family.

In terms of biological role, may play a role in DNA repair. It seems to be involved in an RecBC-independent recombinational process of DNA repair. It may act with RecF and RecO. This chain is Recombination protein RecR, found in Lactiplantibacillus plantarum (strain ATCC BAA-793 / NCIMB 8826 / WCFS1) (Lactobacillus plantarum).